A 401-amino-acid polypeptide reads, in one-letter code: CCA-adding enzyme (401 aa).

Residues glycine 32 and arginine 35 each coordinate ATP. The CTP site is built by glycine 32 and arginine 35. Mg(2+) contacts are provided by aspartate 45 and aspartate 47. Residues arginine 116, aspartate 159, arginine 162, arginine 165, and arginine 168 each coordinate ATP. CTP contacts are provided by arginine 116, aspartate 159, arginine 162, arginine 165, and arginine 168.

It belongs to the tRNA nucleotidyltransferase/poly(A) polymerase family. Bacterial CCA-adding enzyme type 3 subfamily. In terms of assembly, homodimer. Requires Mg(2+) as cofactor.

It catalyses the reaction a tRNA precursor + 2 CTP + ATP = a tRNA with a 3' CCA end + 3 diphosphate. The enzyme catalyses a tRNA with a 3' CCA end + 2 CTP + ATP = a tRNA with a 3' CCACCA end + 3 diphosphate. Functionally, catalyzes the addition and repair of the essential 3'-terminal CCA sequence in tRNAs without using a nucleic acid template. Adds these three nucleotides in the order of C, C, and A to the tRNA nucleotide-73, using CTP and ATP as substrates and producing inorganic pyrophosphate. tRNA 3'-terminal CCA addition is required both for tRNA processing and repair. Also involved in tRNA surveillance by mediating tandem CCA addition to generate a CCACCA at the 3' terminus of unstable tRNAs. While stable tRNAs receive only 3'-terminal CCA, unstable tRNAs are marked with CCACCA and rapidly degraded. The polypeptide is CCA-adding enzyme (Streptococcus mutans serotype c (strain ATCC 700610 / UA159)).